The chain runs to 236 residues: Purine nucleoside phosphorylase DeoD-type (236 aa).

H5 serves as a coordination point for a purine D-ribonucleoside. Phosphate is bound by residues G21, R25, R44, and R88 to T91. Residues E180–E182 and S204–D205 contribute to the a purine D-ribonucleoside site. Catalysis depends on D205, which acts as the Proton donor.

The protein belongs to the PNP/UDP phosphorylase family. Homohexamer; trimer of homodimers.

The catalysed reaction is a purine D-ribonucleoside + phosphate = a purine nucleobase + alpha-D-ribose 1-phosphate. The enzyme catalyses a purine 2'-deoxy-D-ribonucleoside + phosphate = a purine nucleobase + 2-deoxy-alpha-D-ribose 1-phosphate. Functionally, catalyzes the reversible phosphorolytic breakdown of the N-glycosidic bond in the beta-(deoxy)ribonucleoside molecules, with the formation of the corresponding free purine bases and pentose-1-phosphate. This is Purine nucleoside phosphorylase DeoD-type from Shewanella baltica (strain OS223).